We begin with the raw amino-acid sequence, 217 residues long: Protein dao-4 (217 aa).

Positions 1 to 21 are cleaved as a signal peptide; it reads MKIALYSILLITVCYLSSTDA.

It is found in the nucleus. The protein resides in the secreted. Functionally, probably acts downstream of the Wnt signaling pathway. The polypeptide is Protein dao-4 (Caenorhabditis elegans).